Here is a 433-residue protein sequence, read N- to C-terminus: Enolase (433 aa).

Gln167 contacts (2R)-2-phosphoglycerate. The active-site Proton donor is the Glu209. Mg(2+) contacts are provided by Asp246, Glu291, and Asp318. Positions 343, 372, 373, and 394 each coordinate (2R)-2-phosphoglycerate. Catalysis depends on Lys343, which acts as the Proton acceptor.

This sequence belongs to the enolase family. In terms of assembly, component of the RNA degradosome, a multiprotein complex involved in RNA processing and mRNA degradation. Mg(2+) is required as a cofactor.

The protein localises to the cytoplasm. Its subcellular location is the secreted. It is found in the cell surface. The enzyme catalyses (2R)-2-phosphoglycerate = phosphoenolpyruvate + H2O. It functions in the pathway carbohydrate degradation; glycolysis; pyruvate from D-glyceraldehyde 3-phosphate: step 4/5. Catalyzes the reversible conversion of 2-phosphoglycerate (2-PG) into phosphoenolpyruvate (PEP). It is essential for the degradation of carbohydrates via glycolysis. This chain is Enolase, found in Pasteurella multocida (strain Pm70).